We begin with the raw amino-acid sequence, 132 residues long: Small ribosomal subunit protein eS6 (132 aa).

Belongs to the eukaryotic ribosomal protein eS6 family.

The sequence is that of Small ribosomal subunit protein eS6 from Methanosphaerula palustris (strain ATCC BAA-1556 / DSM 19958 / E1-9c).